The chain runs to 1306 residues: Kinesin-like protein KIN-14L (1306 aa).

A Kinesin motor domain is found at 142-456 (NVKVFCRSRP…LSFSARAKNA (315 aa)). An ATP-binding site is contributed by 223–230 (GQSRSGKT). 2 coiled-coil regions span residues 466–507 (IKKW…ANDQ) and 540–595 (HRIE…ALNS). Polar residues-rich tracts occupy residues 592–611 (ALNSSDARSTIGSESASVIS) and 660–677 (LGSSPQAPSPSNKQTNAQ). 3 disordered regions span residues 592-627 (ALNSSDARSTIGSESASVISTPKMMESTADSSSVTK), 657-710 (KSGL…SGAI), and 849-881 (KSHTSRSRSSSRGSSPGRSPVHHHHDHGSRTSL). Positions 855–867 (SRSSSRGSSPGRS) are enriched in low complexity.

Belongs to the TRAFAC class myosin-kinesin ATPase superfamily. Kinesin family. KIN-14 subfamily.

The polypeptide is Kinesin-like protein KIN-14L (Oryza sativa subsp. japonica (Rice)).